The sequence spans 301 residues: Acetylglutamate kinase (301 aa).

Residues 72 to 73 (GG), arginine 94, and asparagine 199 contribute to the substrate site.

The protein belongs to the acetylglutamate kinase family. ArgB subfamily.

The protein localises to the cytoplasm. It carries out the reaction N-acetyl-L-glutamate + ATP = N-acetyl-L-glutamyl 5-phosphate + ADP. Its pathway is amino-acid biosynthesis; L-arginine biosynthesis; N(2)-acetyl-L-ornithine from L-glutamate: step 2/4. In terms of biological role, catalyzes the ATP-dependent phosphorylation of N-acetyl-L-glutamate. This is Acetylglutamate kinase from Bartonella bacilliformis (strain ATCC 35685 / KC583 / Herrer 020/F12,63).